The sequence spans 834 residues: Protein translocase subunit SecA (834 aa).

ATP-binding positions include Gln-85, 103 to 107 (GEGKT), and Asp-491. A disordered region spans residues 790-809 (RETSTNINDGEGGSHEPIKR). The Zn(2+) site is built by Cys-820, Cys-822, Cys-831, and Cys-832.

Belongs to the SecA family. As to quaternary structure, monomer and homodimer. Part of the essential Sec protein translocation apparatus which comprises SecA, SecYEG and auxiliary proteins SecDF. Other proteins may also be involved. Requires Zn(2+) as cofactor.

It is found in the cell membrane. The protein resides in the cytoplasm. It catalyses the reaction ATP + H2O + cellular proteinSide 1 = ADP + phosphate + cellular proteinSide 2.. Its function is as follows. Part of the Sec protein translocase complex. Interacts with the SecYEG preprotein conducting channel. Has a central role in coupling the hydrolysis of ATP to the transfer of proteins into and across the cell membrane, serving as an ATP-driven molecular motor driving the stepwise translocation of polypeptide chains across the membrane. This is Protein translocase subunit SecA from Clostridium novyi (strain NT).